We begin with the raw amino-acid sequence, 190 residues long: Superoxide dismutase [Cu-Zn] (190 aa).

An N-terminal signal peptide occupies residues 1–23 (MKLTNLALAFTLFGASAVAFAHA). Cu cation contacts are provided by histidine 83, histidine 85, and histidine 108. Cysteine 90 and cysteine 186 are disulfide-bonded. Zn(2+)-binding residues include histidine 108, histidine 117, histidine 126, and aspartate 129. Residues 162 to 181 (MIHEGGDNHSDHPAPLGGGG) form a disordered region. Histidine 164 provides a ligand contact to Cu cation.

This sequence belongs to the Cu-Zn superoxide dismutase family. As to quaternary structure, homodimer. It depends on Cu cation as a cofactor. Zn(2+) is required as a cofactor.

The protein localises to the periplasm. It catalyses the reaction 2 superoxide + 2 H(+) = H2O2 + O2. In terms of biological role, destroys radicals which are normally produced within the cells and which are toxic to biological systems. In Actinobacillus pleuropneumoniae (Haemophilus pleuropneumoniae), this protein is Superoxide dismutase [Cu-Zn] (sodC).